Consider the following 201-residue polypeptide: Adenylyl-sulfate kinase (201 aa).

35–42 (GLSGSGKS) contributes to the ATP binding site. Ser-109 (phosphoserine intermediate) is an active-site residue.

It belongs to the APS kinase family.

It carries out the reaction adenosine 5'-phosphosulfate + ATP = 3'-phosphoadenylyl sulfate + ADP + H(+). The protein operates within sulfur metabolism; hydrogen sulfide biosynthesis; sulfite from sulfate: step 2/3. Catalyzes the synthesis of activated sulfate. The chain is Adenylyl-sulfate kinase from Salmonella paratyphi A (strain AKU_12601).